A 261-amino-acid polypeptide reads, in one-letter code: Neurovirulence factor ICP34.5 (261 aa).

Residues 1–17 (MSRRRGPRRRGPRRRPR) show a composition bias toward basic residues. The interval 1–19 (MSRRRGPRRRGPRRRPRPG) is required for nucleolar localization. 3 disordered regions span residues 1 to 59 (MSRR…SAPA), 75 to 135 (DSDD…LALR), and 145 to 164 (RLSL…APRG). 4 repeats span residues 3-7 (RRRGP), 8-12 (RRRGP), 16-23 (PRPGAPAV), and 24-31 (PRPGAPAV). The segment at 3 to 12 (RRRGPRRRGP) is 2 X 5 AA tandem repeats of R-R-R-G-P. Positions 16-31 (PRPGAPAVPRPGAPAV) are 2 X 8 AA tandem repeats of P-R-P-G-A-P-A-V. The span at 18–32 (PGAPAVPRPGAPAVP) shows a compositional bias: pro residues. Residues 75–88 (DSDDADYAGNDDAE) are compositionally biased toward acidic residues. Residues 101–111 (APEAPHAAPAA) show a composition bias toward low complexity. The Nuclear export signal signature appears at 128–137 (LPPHLALRLR). Residues 163–176 (RGKVCFSPRVQVRH) form a binding to PP1CA region. The interval 163–176 (RGKVCFSPRVQVRH) is interaction with host PPP1CA. The important for interferon resistance stretch occupies residues 178–261 (VAWETAARLA…AAAGPGRRAV (84 aa)). The Bipartite nuclear localization signal motif lies at 188-206 (RRGSWARERADRDRFRRRV). An interaction with host EIF2S1/EIF-2ALPHA region spans residues 206 to 221 (VAAAEAVIGPCLEPEA). The segment at 223 to 261 (ARARARARAHEDGGPAEEEEAAAAARGSSAAAGPGRRAV) is disordered. Residues 244-261 (AAAARGSSAAAGPGRRAV) show a composition bias toward low complexity.

Belongs to the PPP1R15 family. In terms of assembly, interacts with host PPP1CA to form a high-molecular-weight complex that dephosphorylates EIF2S1/eIF-2alpha. Interacts with host EIF2S1/eIF-2alpha; this interaction is crucial for the specific dephosphorylation of EIF2S1/eIF-2alpha by PPP1CA.

The protein resides in the host cytoplasm. The protein localises to the host nucleus. It is found in the host nucleolus. Its subcellular location is the virion. Plays essential roles in viral nuclear egress to mediate capsid transit across the nuclear membrane and also in the inhibition of host immune response and integrated stress response (ISR). Facilitates nuclear egress cooperatively with host C1QBP and protein kinase C/PKC to induce lamin A/C phosphorylation and subsequent reorganization. In turn, lamina disassembles and nuclear egress occurs. Recruits the serine/threonine-protein phosphatase PPP1CA/PP1-alpha to dephosphorylate the translation initiation factor EIF2S1/eIF-2alpha, thereby couteracting the host shutoff of protein synthesis involving double-stranded RNA-dependent protein kinase EIF2AK2/PKR. Also down-modulates the host MHC class II proteins cell surface expression. Acts as a neurovirulence factor that has a profound effect on the growth of the virus in central nervous system tissue, probably through its ability to maintain an environment favorable for viral replication. The protein is Neurovirulence factor ICP34.5 (RL1) of Human herpesvirus 2 (strain HG52) (HHV-2).